The sequence spans 527 residues: Endogenous retrovirus group FC1 member 1 Env polyprotein (527 aa).

Positions 1–411 (MNSPCDRLQQ…EPRPQNKSKW (411 aa)) are surface protein. Residues 280–283 (CFLC) carry the CXXC motif. Residues 412 to 432 (AIFLPLVLGISLASSLVASGL) are fusion peptide. A transmembrane protein region spans residues 412 to 527 (AIFLPLVLGI…LKKKKSSKRS (116 aa)). The CKS-17 signature appears at 477–493 (AQNRQALDLLMAEKGRT). A disulfide bridge connects residues Cys-494 and Cys-501. The CX6CC signature appears at 494–502 (CLFLQEECC).

Belongs to the gamma type-C retroviral envelope protein family. HERV class-I F(c)2 env subfamily. The CXXC motif is highly conserved across a broad range of retroviral envelope proteins. It is thought to participate in the formation of a labile disulfide bond possibly with the CX6CC motif present in the transmembrane domain. Low expression in skin and testis.

It is found in the virion. Its function is as follows. Retroviral envelope proteins mediate receptor recognition and membrane fusion during early infection. Endogenous envelope proteins may have kept, lost or modified their original function during evolution. This endogenous envelope protein has lost its original fusogenic properties. The protein is Endogenous retrovirus group FC1 member 1 Env polyprotein (ERVFC1-1) of Homo sapiens (Human).